The sequence spans 339 residues: Annexin A2 (339 aa).

Ser-2 carries the post-translational modification N-acetylserine. The interval 2–24 (STVHEILCKLSLEGDHSTPPSAY) is S100A10-binding site. Residue Tyr-24 is modified to Phosphotyrosine; by SRC. A Phosphoserine; by PKC modification is found at Ser-26. 2 Annexin repeats span residues 33–104 (FDAE…GLLK) and 105–176 (TPAQ…ALAK). Lys-49 carries the N6-acetyllysine; alternate modification. Residue Lys-49 forms a Glycyl lysine isopeptide (Lys-Gly) (interchain with G-Cter in SUMO1); alternate linkage. Lys-49 is covalently cross-linked (Glycyl lysine isopeptide (Lys-Gly) (interchain with G-Cter in SUMO2); alternate). Lys-152 carries the post-translational modification N6-acetyllysine. Ser-184 is modified (phosphoserine). Annexin repeat units lie at residues 189–261 (ELID…NLVQ) and 265–336 (NKPL…YLCG). Tyr-199 carries the post-translational modification Phosphotyrosine. Lys-227 carries the N6-acetyllysine modification.

It belongs to the annexin family. As to quaternary structure, heterotetramer containing 2 light chains of S100A10/p11 and 2 heavy chains of ANXA2/p36. Interacts with ATP1B1. Interacts with DYSF. Interacts with COCH. Interacts (via repeat Annexin 1) with PCSK9 (via the C-terminal domain); the interaction inhibits the degradation of LDLR. Interacts with CEACAM1 (via the cytoplasmic domain); this interaction is regulated by phosphorylation of CEACAM1. Interacts with APPL2 and APPL1; targets APPL2 to endosomes and acting in parallel to RAB5A. Interacts with S100A4. May interact with UBAP2. Interacts with PLEKHG4B; this interaction is required for PLEKHG4B localization to cell-cell adhesions. In terms of processing, ISGylated.

The protein localises to the secreted. It localises to the extracellular space. The protein resides in the extracellular matrix. Its subcellular location is the basement membrane. Its function is as follows. Calcium-regulated membrane-binding protein whose affinity for calcium is greatly enhanced by anionic phospholipids. It binds two calcium ions with high affinity. May be involved in heat-stress response. Inhibits PCSK9-enhanced LDLR degradation, probably reduces PCSK9 protein levels via a translational mechanism but also competes with LDLR for binding with PCSK9. Binds to endosomes damaged by phagocytosis of particulate wear debris and participates in endosomal membrane stabilization, thereby limiting NLRP3 inflammasome activation. Required for endothelial cell surface plasmin generation and may support fibrinolytic surveillance and neoangiogenesis. The polypeptide is Annexin A2 (ANXA2) (Canis lupus familiaris (Dog)).